The chain runs to 232 residues: Small ribosomal subunit protein uS2 (232 aa).

Belongs to the universal ribosomal protein uS2 family.

This Desulforamulus reducens (strain ATCC BAA-1160 / DSM 100696 / MI-1) (Desulfotomaculum reducens) protein is Small ribosomal subunit protein uS2.